A 266-amino-acid chain; its full sequence is Glucosamine-6-phosphate deaminase (266 aa).

Asp72 acts as the Proton acceptor; for enolization step in catalysis. Catalysis depends on Asp141, which acts as the For ring-opening step. His143 acts as the Proton acceptor; for ring-opening step in catalysis. Glu148 serves as the catalytic For ring-opening step.

Belongs to the glucosamine/galactosamine-6-phosphate isomerase family. NagB subfamily. As to quaternary structure, homohexamer; trimer of disulfide-linked dimers.

The catalysed reaction is alpha-D-glucosamine 6-phosphate + H2O = beta-D-fructose 6-phosphate + NH4(+). Its pathway is amino-sugar metabolism; N-acetylneuraminate degradation; D-fructose 6-phosphate from N-acetylneuraminate: step 5/5. Allosterically activated by N-acetylglucosamine 6-phosphate (GlcNAc6P). Functionally, catalyzes the reversible isomerization-deamination of glucosamine 6-phosphate (GlcN6P) to form fructose 6-phosphate (Fru6P) and ammonium ion. The polypeptide is Glucosamine-6-phosphate deaminase (Vibrio parahaemolyticus serotype O3:K6 (strain RIMD 2210633)).